Reading from the N-terminus, the 432-residue chain is Homogentisate 1,2-dioxygenase (432 aa).

The active-site Proton acceptor is H286. 2 residues coordinate Fe cation: H329 and E335. 2 residues coordinate homogentisate: Y344 and H365. H365 is a Fe cation binding site.

The protein belongs to the homogentisate dioxygenase family. In terms of assembly, hexamer; dimer of trimers. The cofactor is Fe cation.

The enzyme catalyses homogentisate + O2 = 4-maleylacetoacetate + H(+). It functions in the pathway amino-acid degradation; L-phenylalanine degradation; acetoacetate and fumarate from L-phenylalanine: step 4/6. Involved in the catabolism of homogentisate (2,5-dihydroxyphenylacetate or 2,5-OH-PhAc), a central intermediate in the degradation of phenylalanine and tyrosine. Catalyzes the oxidative ring cleavage of the aromatic ring of homogentisate to yield maleylacetoacetate. This Bordetella petrii (strain ATCC BAA-461 / DSM 12804 / CCUG 43448) protein is Homogentisate 1,2-dioxygenase.